The following is a 224-amino-acid chain: Charged multivesicular body protein 4b (224 aa).

Residues 1 to 23 (MSVFGKLFGAGGGKAGKGGPTPQ) are disordered. An N-acetylserine modification is found at Ser-2. Lys-6 bears the N6-acetyllysine mark. A compositionally biased stretch (gly residues) spans 8 to 19 (FGAGGGKAGKGG). Residues 23-183 (QEAIQRLRDT…EELDKNLLEI (161 aa)) adopt a coiled-coil conformation. Lys-114 is modified (N6-acetyllysine). 2 positions are modified to phosphoserine: Ser-184 and Ser-223. Positions 185 to 224 (GPETVPLPNVPSIALPSKPAKKKEEEDDDMKELENWAGSM) are disordered.

This sequence belongs to the SNF7 family. As to quaternary structure, probable core component of the endosomal sorting required for transport complex III (ESCRT-III). ESCRT-III components are thought to multimerize to form a flat lattice on the perimeter membrane of the endosome. Several assembly forms of ESCRT-III may exist that interact and act sequentially. Interacts with CHMP6 and CHMP4C. Interacts with PDCD6IP; the interaction is direct. Interacts with VPS4A; the interaction is direct. Interacts with VPS4B; the interaction is direct. Interacts with CHMP7. Interacts with CFTR; the interaction requires misfolded CFTR. Interacts with PTPN23. Interacts with CC2D1B. Post-translationally, ISGylated. Isgylation weakens its interaction with VPS4A. In terms of tissue distribution, widely expressed. Expressed at higher level in heart and skeletal muscle. Also expressed in brain, colon, thymus, spleen, kidney, liver, small intestine, placenta, lung and peripheral blood lymphocytes.

It is found in the cytoplasm. It localises to the cytosol. The protein localises to the late endosome membrane. The protein resides in the midbody. Its subcellular location is the nucleus envelope. Functionally, probable core component of the endosomal sorting required for transport complex III (ESCRT-III) which is involved in multivesicular bodies (MVBs) formation and sorting of endosomal cargo proteins into MVBs. MVBs contain intraluminal vesicles (ILVs) that are generated by invagination and scission from the limiting membrane of the endosome and mostly are delivered to lysosomes enabling degradation of membrane proteins, such as stimulated growth factor receptors, lysosomal enzymes and lipids. The MVB pathway appears to require the sequential function of ESCRT-O, -I,-II and -III complexes. ESCRT-III proteins mostly dissociate from the invaginating membrane before the ILV is released. The ESCRT machinery also functions in topologically equivalent membrane fission events, such as the terminal stages of cytokinesis. Together with SPAST, the ESCRT-III complex promotes nuclear envelope sealing and mitotic spindle disassembly during late anaphase. Plays a role in the endosomal sorting pathway. ESCRT-III proteins are believed to mediate the necessary vesicle extrusion and/or membrane fission activities, possibly in conjunction with the AAA ATPase VPS4. When overexpressed, membrane-assembled circular arrays of CHMP4B filaments can promote or stabilize negative curvature and outward budding. CHMP4A/B/C are required for the exosomal release of SDCBP, CD63 and syndecan. Majority of the protein exists in a folded closed conformation. Its function is as follows. (Microbial infection) The ESCRT machinery also functions in topologically equivalent membrane fission events, such as the budding of enveloped viruses (HIV-1 and other lentiviruses). Via its interaction with PDCD6IP involved in HIV-1 p6- and p9-dependent virus release. This is Charged multivesicular body protein 4b (CHMP4B) from Homo sapiens (Human).